The chain runs to 317 residues: Secreted frizzled-related protein 5 (317 aa).

Positions 1 to 29 are cleaved as a signal peptide; sequence MRAAAAGGGVRTAALALLLGALHWAPARC. One can recognise an FZ domain in the interval 48 to 165; sequence SKPPQCLDIP…PLDNDLCIAV (118 aa). Disulfide bonds link Cys-53-Cys-116, Cys-63-Cys-109, Cys-100-Cys-135, Cys-124-Cys-162, Cys-128-Cys-152, Cys-181-Cys-253, Cys-184-Cys-255, and Cys-198-Cys-303. The NTR domain maps to 181-303; sequence CAQCEMEHSA…AVKFMFSYPC (123 aa).

Belongs to the secreted frizzled-related protein (sFRP) family. As to expression, highly expressed in the retinal pigment epithelium (RPE) and pancreas. Weak expression in heart, liver and muscle.

The protein localises to the secreted. Functionally, soluble frizzled-related proteins (sFRPS) function as modulators of Wnt signaling through direct interaction with Wnts. They have a role in regulating cell growth and differentiation in specific cell types. SFRP5 may be involved in determining the polarity of photoreceptor, and perhaps, other cells in the retina. The polypeptide is Secreted frizzled-related protein 5 (SFRP5) (Homo sapiens (Human)).